The sequence spans 189 residues: Phosphoheptose isomerase (189 aa).

The 156-residue stretch at 34–189 (LADSLAGGRK…CDLVEKRLFP (156 aa)) folds into the SIS domain. 49–51 (NGG) provides a ligand contact to substrate. Zn(2+)-binding residues include His58 and Glu62. Residues Glu62, 91–92 (ND), 117–119 (STS), Ser122, and Gln169 each bind substrate. 2 residues coordinate Zn(2+): Gln169 and His177.

This sequence belongs to the SIS family. GmhA subfamily. As to quaternary structure, homotetramer. The cofactor is Zn(2+).

It localises to the cytoplasm. The catalysed reaction is 2 D-sedoheptulose 7-phosphate = D-glycero-alpha-D-manno-heptose 7-phosphate + D-glycero-beta-D-manno-heptose 7-phosphate. Its pathway is carbohydrate biosynthesis; D-glycero-D-manno-heptose 7-phosphate biosynthesis; D-glycero-alpha-D-manno-heptose 7-phosphate and D-glycero-beta-D-manno-heptose 7-phosphate from sedoheptulose 7-phosphate: step 1/1. Catalyzes the isomerization of sedoheptulose 7-phosphate in D-glycero-D-manno-heptose 7-phosphate. The sequence is that of Phosphoheptose isomerase from Geobacter sulfurreducens (strain ATCC 51573 / DSM 12127 / PCA).